An 809-amino-acid polypeptide reads, in one-letter code: Phenylalanine--tRNA ligase beta subunit (809 aa).

A tRNA-binding domain is found at 39–154 (APPTSKIVVG…EDTPVGQDIR (116 aa)). A B5 domain is found at 405–480 (PQRAPVKMRV…RIYGFEKIPA (76 aa)). Mg(2+) contacts are provided by Asp458, Asp464, Glu467, and Glu468. The 102-residue stretch at 707 to 808 (SKFPPVRRDI…RMARAGARLR (102 aa)) folds into the FDX-ACB domain.

The protein belongs to the phenylalanyl-tRNA synthetase beta subunit family. Type 1 subfamily. As to quaternary structure, tetramer of two alpha and two beta subunits. The cofactor is Mg(2+).

The protein resides in the cytoplasm. The enzyme catalyses tRNA(Phe) + L-phenylalanine + ATP = L-phenylalanyl-tRNA(Phe) + AMP + diphosphate + H(+). The protein is Phenylalanine--tRNA ligase beta subunit of Burkholderia lata (strain ATCC 17760 / DSM 23089 / LMG 22485 / NCIMB 9086 / R18194 / 383).